A 238-amino-acid polypeptide reads, in one-letter code: Small proline-rich protein 3 (238 aa).

Residues 1–67 (MSSYQQKQPF…CSTKVPEPGN (67 aa)) form a disordered region. The residue at position 2 (S2) is an N-acetylserine. Tandem repeats lie at residues 52 to 59 (TKIPEPCS), 60 to 67 (TKVPEPGN), 68 to 75 (TVVLEPDY), 76 to 83 (TTMPGPCS), 84 to 91 (TNITEPDY), 92 to 99 (TTIPGPCS), 100 to 107 (TNITEPDY), 108 to 115 (TTIPGPCS), 116 to 123 (TNIPGPDR), 124 to 131 (TVVPGSCS), 132 to 139 (TNITEPDY), 140 to 147 (TTIPGPSS), 148 to 155 (TKIPDPGC), 156 to 163 (AMVPGPSP), 164 to 175 (SSTSEPSSEPCS), 176 to 183 (INVREPGY), 184 to 191 (MNASEPTH), 192 to 199 (AKVPDQGY), 200 to 207 (TKIPDQGS), 208 to 215 (SKVPEPCQ), and 216 to 223 (SRVPEVCP). The interval 52-223 (TKIPEPCSTK…CQSRVPEVCP (172 aa)) is 21 X 8 AA approximate tandem repeats. The tract at residues 110 to 238 (IPGPCSTNIP…VSAKQKTKQK (129 aa)) is disordered. Positions 163 to 175 (PSSTSEPSSEPCS) are enriched in low complexity.

The protein belongs to the cornifin (SPRR) family.

It is found in the cytoplasm. Functionally, cross-linked envelope protein of keratinocytes. The polypeptide is Small proline-rich protein 3 (Sprr3) (Mus musculus (Mouse)).